A 1907-amino-acid polypeptide reads, in one-letter code: Receptor-type tyrosine-protein phosphatase S (1907 aa).

The N-terminal stretch at 1 to 29 (MAPTWSPSVVSVVGPVGLFLVLLARGCLA) is a signal peptide. The Extracellular portion of the chain corresponds to 30–1257 (EEPPRFIREP…PQPIVDGEEG (1228 aa)). 3 Ig-like C2-type domains span residues 33-123 (PRFI…AKLT), 135-224 (PNID…ANLY), and 232-314 (PRFS…AQIT). Intrachain disulfides connect Cys54–Cys107 and Cys156–Cys207. Residues 68 to 72 (KKGKK) form an important for binding to glycosaminoglycan chains region. 2 N-linked (GlcNAc...) asparagine glycosylation sites follow: Asn250 and Asn295. An intrachain disulfide couples Cys253 to Cys298. Fibronectin type-III domains are found at residues 321–411 (APGT…TGEQ), 416–510 (APRN…TQQG), 514–603 (QPMN…TLQA), 608–705 (PPQD…TDED), 710–809 (PPRK…TKGA), 810–906 (VLGR…APRG), 907–1008 (FPQI…LARD), and 1011–1095 (SPKN…TAFN). Positions 691-700 (PGPESSPVVV) are enriched in low complexity. Positions 691-711 (PGPESSPVVVRTDEDVPSAPP) are disordered. A glycan (N-linked (GlcNAc...) asparagine) is linked at Asn720. Residue Asn916 is glycosylated (N-linked (GlcNAc...) asparagine). A helical membrane pass occupies residues 1258 to 1278 (LIWVIGPVLAVVFIICIVIAI). The Cytoplasmic segment spans residues 1279 to 1907 (LLYKNKPDSK…YLGSFDHYAT (629 aa)). Basic and acidic residues predominate over residues 1286–1296 (DSKRKDSEPRT). Residues 1286-1313 (DSKRKDSEPRTKCLLNNADLAPHHPKDP) are disordered. 2 Tyrosine-protein phosphatase domains span residues 1352-1607 (LSQE…LLEA) and 1639-1898 (MELE…ALEY). Substrate is bound by residues Asp1516, 1548–1554 (CSAGVGR), and Gln1592. Catalysis depends on Cys1548, which acts as the Phosphocysteine intermediate. The Phosphocysteine intermediate role is filled by Cys1839.

It belongs to the protein-tyrosine phosphatase family. Receptor class 2A subfamily. In terms of assembly, binding to large heparan sulfate proteoglycan structures promotes oligomerization. Binding to chondroitin sulfate proteoglycan does not lead to oligomerization. Interacts (via Ig-like domains) with NTRK3. Interacts (via Ig-like domains) with NTRK1, but does not form detectable complexes with NTRK2. Interacts with PPFIA1, PPFIA2 and PPFIA3. A cleavage occurs, separating the extracellular domain from the transmembrane segment. This process called 'ectodomain shedding' is thought to be involved in receptor desensitization, signal transduction and/or membrane localization. As to expression, detected in brain cortex, cerebellum and thoracic spinal cord (at protein level). Detected in motor cortex and white matter of the spinal cord, but not in spinal cord gray matter. Isoform 1 and isoform 6 are predominantly expressed in the brain (cerebrum and cerebellum) and to a lesser extent in the heart and skeletal muscle. Also found in neuronal-derived cell lines. Detected in the ganglion cell layer of the retina and in glial cells along the optic nerve. Detected in bone marrow and spleen plasmacytoid dendritic cells.

It localises to the cell membrane. Its subcellular location is the cell projection. It is found in the axon. The protein resides in the perikaryon. The protein localises to the cytoplasmic vesicle. It localises to the secretory vesicle. Its subcellular location is the synaptic vesicle membrane. It is found in the synapse. The protein resides in the synaptosome. The protein localises to the postsynaptic density. It localises to the neuron projection. Its subcellular location is the growth cone. The enzyme catalyses O-phospho-L-tyrosyl-[protein] + H2O = L-tyrosyl-[protein] + phosphate. Its function is as follows. Cell surface receptor that binds to glycosaminoglycans, including chondroitin sulfate proteoglycans and heparan sulfate proteoglycans. Binding to chondroitin sulfate and heparan sulfate proteoglycans has opposite effects on PTPRS oligomerization and regulation of neurite outgrowth. Contributes to the inhibition of neurite and axonal outgrowth by chondroitin sulfate proteoglycans, also after nerve transection. Plays a role in stimulating neurite outgrowth in response to the heparan sulfate proteoglycan GPC2. Required for normal brain development, especially for normal development of the pituitary gland and the olfactory bulb. Functions as a tyrosine phosphatase. Mediates dephosphorylation of NTRK1, NTRK2 and NTRK3. Plays a role in down-regulation of signaling cascades that lead to the activation of Akt and MAP kinases. Down-regulates TLR9-mediated activation of NF-kappa-B, as well as production of TNF, interferon alpha and interferon beta. The chain is Receptor-type tyrosine-protein phosphatase S (Ptprs) from Mus musculus (Mouse).